A 224-amino-acid polypeptide reads, in one-letter code: PKHD-type hydroxylase HNE_1625 (224 aa).

The Fe2OG dioxygenase domain maps to 77 to 175 (KFAPPLISCS…RFVFVGWIQS (99 aa)). The Fe cation site is built by H95, D97, and H156. R166 lines the 2-oxoglutarate pocket.

Fe(2+) serves as cofactor. Requires L-ascorbate as cofactor.

The chain is PKHD-type hydroxylase HNE_1625 from Hyphomonas neptunium (strain ATCC 15444).